We begin with the raw amino-acid sequence, 763 residues long: ATP-dependent RNA helicase glh-1 (763 aa).

Residues 1–30 (MSDGWSDSESAAKAKTGFGSGGGFGGGNNG) form a disordered region. Gly residues predominate over residues 18 to 30 (FGSGGGFGGGNNG). 7 repeat units span residues 24–33 (FGGGNNGGSG), 34–43 (FGGGKNGGTG), 44–53 (FGGGNTGGSG), 54–63 (FGGGNTGGSG), 64–73 (FGGGKTGGSG), 74–83 (FGGGNTCGSG), and 84–93 (FGGGSTGGSP). The segment at 24-93 (FGGGNNGGSG…FGGGSTGGSP (70 aa)) is 7 X 10 AA tandem repeats, Gly-rich. 2 CCHC-type zinc fingers span residues 158–175 (NNCF…DCPE) and 183–200 (RVCY…ECTE). Residues 193 to 230 (HTSRECTEERKPREGRTGGFGGGAGFGNNGGNDGFGGD) form a disordered region. Positions 194–208 (TSRECTEERKPREGR) are enriched in basic and acidic residues. Over residues 209-230 (TGGFGGGAGFGNNGGNDGFGGD) the composition is skewed to gly residues. CCHC-type zinc fingers lie at residues 242–259 (MKCF…ECPE) and 262–279 (RGCF…ECPN). A Q motif motif is present at residues 341–369 (KTFAEANLTETMQKNVAHAGYSKTTPIQQ). The Helicase ATP-binding domain maps to 372–556 (LPLVHQGYDI…RAFLRENYVM (185 aa)). 385 to 392 (AQTGSGKT) lines the ATP pocket. Residues 423–427 (ILTPT) carry the Phosphodegron motif. The DEAD box motif lies at 499 to 502 (DEAD). Residues 592–739 (DIDSYTTEKS…IVPDWMQGAA (148 aa)) enclose the Helicase C-terminal domain.

Belongs to the DEAD box helicase family. DDX4/VASA subfamily. As to quaternary structure, interacts with csn-5; this may prevent glh-1 degradation induced by kgb-1. Interacts with zyx-1. Interacts (via the N-terminal region containing the four CCHC zinc fingers) with pan-1. Interacts with kgb-1; this may promote glh-1 degradation by the proteasome. Post-translationally, phosphorylated by kgb-1 (in vitro); this may be responsible for its degradation by the proteasome.

The protein resides in the cytoplasm. It is found in the cytoplasmic granule. The protein localises to the perinuclear region. It carries out the reaction ATP + H2O = ADP + phosphate + H(+). Functionally, probable ATP-binding RNA helicase. May act redundantly with the P-granule component glh-4 to regulate the formation of the granular structure of P-granules in embryos. Plays a role in positively regulating the localization of pgl-1 to P-granules. May play a role in transgenerational epigenetic inheritance. May protect somatic cells from excessive apoptosis during normal development. The sequence is that of ATP-dependent RNA helicase glh-1 from Caenorhabditis elegans.